The chain runs to 229 residues: MANWTQLGLQDASSPLMEELIYFHDYTLIILTLITILVFYGLASLLFSSNTNRFFLEGQGLETVWTIIPAVILIFIALPSLQLLYLMDEVNNPYLTIKAIGHQWYWSYEYADYRELEFDSYMIPTSDLTSGNPRLLEVDNRLTLPAQTPIRVLVSSADVLHSWAIPSLGIKMDAVPGRLNQVNFFISRCGLFYGQCSEICGANHSFMPIVIESVNFSTFETWVSNFITE.

Over M1–Y26 the chain is Mitochondrial intermembrane. A helical transmembrane segment spans residues T27 to S48. Topologically, residues S49 to E62 are mitochondrial matrix. A helical membrane pass occupies residues T63–Q82. Topologically, residues L83–E229 are mitochondrial intermembrane. Residues H161, C196, E198, C200, H204, and M207 each coordinate Cu cation. Position 198 (E198) interacts with Mg(2+).

This sequence belongs to the cytochrome c oxidase subunit 2 family. As to quaternary structure, component of the cytochrome c oxidase (complex IV, CIV), a multisubunit enzyme composed of a catalytic core of 3 subunits and several supernumerary subunits. The complex exists as a monomer or a dimer and forms supercomplexes (SCs) in the inner mitochondrial membrane with ubiquinol-cytochrome c oxidoreductase (cytochrome b-c1 complex, complex III, CIII). Cu cation is required as a cofactor.

The protein resides in the mitochondrion inner membrane. The enzyme catalyses 4 Fe(II)-[cytochrome c] + O2 + 8 H(+)(in) = 4 Fe(III)-[cytochrome c] + 2 H2O + 4 H(+)(out). Its function is as follows. Component of the cytochrome c oxidase, the last enzyme in the mitochondrial electron transport chain which drives oxidative phosphorylation. The respiratory chain contains 3 multisubunit complexes succinate dehydrogenase (complex II, CII), ubiquinol-cytochrome c oxidoreductase (cytochrome b-c1 complex, complex III, CIII) and cytochrome c oxidase (complex IV, CIV), that cooperate to transfer electrons derived from NADH and succinate to molecular oxygen, creating an electrochemical gradient over the inner membrane that drives transmembrane transport and the ATP synthase. Cytochrome c oxidase is the component of the respiratory chain that catalyzes the reduction of oxygen to water. Electrons originating from reduced cytochrome c in the intermembrane space (IMS) are transferred via the dinuclear copper A center (CU(A)) of subunit 2 and heme A of subunit 1 to the active site in subunit 1, a binuclear center (BNC) formed by heme A3 and copper B (CU(B)). The BNC reduces molecular oxygen to 2 water molecules using 4 electrons from cytochrome c in the IMS and 4 protons from the mitochondrial matrix. This Patiria pectinifera (Starfish) protein is Cytochrome c oxidase subunit 2 (COII).